The sequence spans 306 residues: Pre-mRNA-splicing factor cwf26 (306 aa).

A disordered region spans residues 130 to 152 (KAEERRKREEKSSNLDEEELRKS). The stretch at 130-198 (KAEERRKREE…KEQQQGVVQV (69 aa)) forms a coiled coil.

This sequence belongs to the CWC26 family. In terms of assembly, belongs to the 40S cdc5-associated complex (or cwf complex), a spliceosome sub-complex reminiscent of a late-stage spliceosome composed of the U2, U5 and U6 snRNAs and at least brr2, cdc5, cwf2/prp3, cwf3/syf1, cwf4/syf3, cwf5/ecm2, spp42/cwf6, cwf7/spf27, cwf8, cwf9, cwf10, cwf11, cwf12, prp45/cwf13, cwf14, cwf15, cwf16, cwf17, cwf18, cwf19, cwf20, cwf21, cwf22, cwf23, cwf24, cwf25, cwf26, cyp7/cwf27, cwf28, cwf29/ist3, lea1, msl1, prp5/cwf1, prp10, prp12/sap130, prp17, prp22, sap61, sap62, sap114, sap145, slu7, smb1, smd1, smd3, smf1, smg1 and syf2.

Its subcellular location is the cytoplasm. The protein localises to the nucleus. In terms of biological role, involved in mRNA splicing. The sequence is that of Pre-mRNA-splicing factor cwf26 (cwf26) from Schizosaccharomyces pombe (strain 972 / ATCC 24843) (Fission yeast).